The primary structure comprises 295 residues: Porphobilinogen deaminase (295 aa).

Cys-241 is modified (S-(dipyrrolylmethanemethyl)cysteine).

It belongs to the HMBS family. Monomer. The cofactor is dipyrromethane.

It carries out the reaction 4 porphobilinogen + H2O = hydroxymethylbilane + 4 NH4(+). The protein operates within porphyrin-containing compound metabolism; protoporphyrin-IX biosynthesis; coproporphyrinogen-III from 5-aminolevulinate: step 2/4. Functionally, tetrapolymerization of the monopyrrole PBG into the hydroxymethylbilane pre-uroporphyrinogen in several discrete steps. The sequence is that of Porphobilinogen deaminase from Lachnospira eligens (strain ATCC 27750 / DSM 3376 / VPI C15-48 / C15-B4) (Eubacterium eligens).